The chain runs to 511 residues: 2,3-bisphosphoglycerate-independent phosphoglycerate mutase (511 aa).

Asp12 and Ser62 together coordinate Mn(2+). The active-site Phosphoserine intermediate is Ser62. Substrate is bound by residues His123, 152-153 (RD), Arg184, Arg190, 259-262 (RADR), and Lys333. Mn(2+)-binding residues include Asp401, His405, Asp442, His443, and His460.

The protein belongs to the BPG-independent phosphoglycerate mutase family. Monomer. The cofactor is Mn(2+).

It carries out the reaction (2R)-2-phosphoglycerate = (2R)-3-phosphoglycerate. Its pathway is carbohydrate degradation; glycolysis; pyruvate from D-glyceraldehyde 3-phosphate: step 3/5. In terms of biological role, catalyzes the interconversion of 2-phosphoglycerate and 3-phosphoglycerate. In Nitratidesulfovibrio vulgaris (strain ATCC 29579 / DSM 644 / CCUG 34227 / NCIMB 8303 / VKM B-1760 / Hildenborough) (Desulfovibrio vulgaris), this protein is 2,3-bisphosphoglycerate-independent phosphoglycerate mutase.